The primary structure comprises 124 residues: MADLKDFAEQLVNLTVKEVNELADILKEEYGIEPAAAAVAVAGGGAAGGEEAEEQTEFDVILTAPGGSKLAVVKLVKELTGLGLKDAKALVDEAPKPVKEGVAKDEAEALKAQLEEAGAEVELK.

Belongs to the bacterial ribosomal protein bL12 family. Homodimer. Part of the ribosomal stalk of the 50S ribosomal subunit. Forms a multimeric L10(L12)X complex, where L10 forms an elongated spine to which 2 to 4 L12 dimers bind in a sequential fashion. Binds GTP-bound translation factors.

Forms part of the ribosomal stalk which helps the ribosome interact with GTP-bound translation factors. Is thus essential for accurate translation. This is Large ribosomal subunit protein bL12 from Christiangramia forsetii (strain DSM 17595 / CGMCC 1.15422 / KT0803) (Gramella forsetii).